The primary structure comprises 313 residues: Porphobilinogen deaminase (313 aa).

An S-(dipyrrolylmethanemethyl)cysteine modification is found at C242.

This sequence belongs to the HMBS family. Monomer. The cofactor is dipyrromethane.

The catalysed reaction is 4 porphobilinogen + H2O = hydroxymethylbilane + 4 NH4(+). Its pathway is porphyrin-containing compound metabolism; protoporphyrin-IX biosynthesis; coproporphyrinogen-III from 5-aminolevulinate: step 2/4. In terms of biological role, tetrapolymerization of the monopyrrole PBG into the hydroxymethylbilane pre-uroporphyrinogen in several discrete steps. In Pectobacterium carotovorum subsp. carotovorum (strain PC1), this protein is Porphobilinogen deaminase.